Here is an 898-residue protein sequence, read N- to C-terminus: MEWSSESAAVRRHRGTAERREGQAAASHPQREASAQEDARGGGRMRGRTESGGESRGAKTALSEARTALALALYLLALRALVQLSLQRLVLSRTSGLQGEFDARQARVYLEHITAIGPRTTGSAENEILTVQYLLEQITLIEEQSNSLHRISVDVQRPTGSFSIDFLGGFTSYYDNITNVVVKLEPQDGAKYAVLANCHFDSVANSPGASDDAVSCAVMLEVLRVMAASPEPLQHAVVFLFNGAEENVLQASHGFITQHPWASLIRAFINLEAAGVGGKELVFQTGPENPWLVQAYVSAAKHPFASVVAQEVFQSGIIPSDTDFRIYRDFGNIPGIDLAFIENGYIYHTKYDTADRILIDSIQRAGDNILAVLKYLATSDMLASSSEYRHGSMVFFDVLGLLVIAYPSRVGSIINYMVVMAVVLYLGRKLLRPNHSNSNYVRDFLCGLGITFISWFTSLVTVLIIAVFVSLIGQSLSWYNYFYIAVCLYGTATVAKIILIHTLAKRFYYVNASDLYLGELFFDTSLFVHCGFLVALTAQGFCSAFMSAVWVAFPLLTKLCVYKDFKKHGAKGRFIALYLLGMFIPYLYGLYLIWAVFEMFTPILGRSGSEIPPDVVLASILAVCVMILSSYFITFIYLVNSTKKTILTLILVCAVTFLLVCSGAFFPYSSNPDSPKPKRVFLQHVSRTFHNLEGSVVKRDSGIWINGFDYTGMSHVTPHIPEINDTIRAHCEENAPLCGFPWYLPVHFLIRKNWYLPAPEISPRNPAHFRLVSKEKMPWDSIKLTFEATGPSHMSFYVRTHKGSTLSQWSLGNGIPVTSRGGDYFVFYSHGLQASAWQFWIEVQVSEEQPEGMVTVAIAAHYLSGENKRSSQLDALKEKFPDWSFPSAWVSTYSLFVF.

An N-acetylmethionine modification is found at M1. The tract at residues 1–59 (MEWSSESAAVRRHRGTAERREGQAAASHPQREASAQEDARGGGRMRGRTESGGESRGAK) is disordered. Over 1–66 (MEWSSESAAV…GAKTALSEAR (66 aa)) the chain is Cytoplasmic. Residues 37–57 (EDARGGGRMRGRTESGGESRG) show a composition bias toward basic and acidic residues. The helical transmembrane segment at 67 to 87 (TALALALYLLALRALVQLSLQ) threads the bilayer. Over 88–393 (RLVLSRTSGL…SSSEYRHGSM (306 aa)) the chain is Lumenal. N-linked (GlcNAc...) asparagine glycosylation is present at N176. C198 and C216 are oxidised to a cystine. 2 residues coordinate Zn(2+): H199 and D211. Residue E245 is the Proton acceptor of the active site. The Zn(2+) site is built by E246, E272, and H348. The helical transmembrane segment at 394–414 (VFFDVLGLLVIAYPSRVGSII) threads the bilayer. Residues 415-451 (NYMVVMAVVLYLGRKLLRPNHSNSNYVRDFLCGLGIT) are Cytoplasmic-facing. The chain crosses the membrane as a helical span at residues 452–472 (FISWFTSLVTVLIIAVFVSLI). Residues 473-480 (GQSLSWYN) lie on the Lumenal side of the membrane. Residues 481-501 (YFYIAVCLYGTATVAKIILIH) form a helical membrane-spanning segment. Topologically, residues 502–515 (TLAKRFYYVNASDL) are cytoplasmic. Residues 516 to 538 (YLGELFFDTSLFVHCGFLVALTA) traverse the membrane as a helical segment. The Lumenal segment spans residues 539 to 542 (QGFC). The helical transmembrane segment at 543-562 (SAFMSAVWVAFPLLTKLCVY) threads the bilayer. Residues 563-573 (KDFKKHGAKGR) are Cytoplasmic-facing. A helical transmembrane segment spans residues 574–594 (FIALYLLGMFIPYLYGLYLIW). Residues 595 to 615 (AVFEMFTPILGRSGSEIPPDV) are Lumenal-facing. Residues 616 to 636 (VLASILAVCVMILSSYFITFI) traverse the membrane as a helical segment. The Cytoplasmic portion of the chain corresponds to 637–645 (YLVNSTKKT). Residues 646–666 (ILTLILVCAVTFLLVCSGAFF) form a helical membrane-spanning segment. The Lumenal portion of the chain corresponds to 667 to 898 (PYSSNPDSPK…WVSTYSLFVF (232 aa)). N-linked (GlcNAc...) asparagine glycosylation is present at N724.

It belongs to the peptidase M28 family. Zn(2+) is required as a cofactor. In terms of tissue distribution, widely expressed, with highest levels in ovary, kidney, hypothalamus and hippocampus. Within the ovarian follicle, expressed in granulosa cells, but not in oocytes. Present in both preantral and antral follicles, but not in atretic antral follicle.

Its subcellular location is the endoplasmic reticulum membrane. Functionally, within the ovary, required for the organization of somatic cells and oocytes into discrete follicular structures. This is Endoplasmic reticulum metallopeptidase 1 from Rattus norvegicus (Rat).